Here is a 182-residue protein sequence, read N- to C-terminus: Large ribosomal subunit protein uL6 (182 aa).

This sequence belongs to the universal ribosomal protein uL6 family. As to quaternary structure, part of the 50S ribosomal subunit.

This protein binds to the 23S rRNA, and is important in its secondary structure. It is located near the subunit interface in the base of the L7/L12 stalk, and near the tRNA binding site of the peptidyltransferase center. This Caldicellulosiruptor saccharolyticus (strain ATCC 43494 / DSM 8903 / Tp8T 6331) protein is Large ribosomal subunit protein uL6.